An 85-amino-acid chain; its full sequence is Alpha-insect toxin BjaIT (85 aa).

A signal peptide spans 1-19 (MNYLVVICFALLLMTGVES). Residues 21 to 83 (RDAYIADNLN…VPIRIPGACR (63 aa)) enclose the LCN-type CS-alpha/beta domain. 4 disulfides stabilise this stretch: Cys-31-Cys-82, Cys-35-Cys-55, Cys-41-Cys-65, and Cys-45-Cys-67. Arg-83 bears the Arginine amide mark.

The protein belongs to the long (4 C-C) scorpion toxin superfamily. Sodium channel inhibitor family. Alpha subfamily. In terms of tissue distribution, expressed by the venom gland.

It localises to the secreted. Its function is as follows. Alpha toxins bind voltage-independently at site-3 of sodium channels (Nav) and inhibit the inactivation of the activated channels, thereby blocking neuronal transmission. This toxin is active against insects (para/tipE). This Hottentotta judaicus (Black scorpion) protein is Alpha-insect toxin BjaIT.